Reading from the N-terminus, the 475-residue chain is Ribulose bisphosphate carboxylase large chain (475 aa).

Positions 1-2 (MS) are excised as a propeptide. N-acetylproline is present on proline 3. An N6,N6,N6-trimethyllysine modification is found at lysine 14. Substrate contacts are provided by asparagine 123 and threonine 173. Lysine 175 (proton acceptor) is an active-site residue. Lysine 177 provides a ligand contact to substrate. 3 residues coordinate Mg(2+): lysine 201, aspartate 203, and glutamate 204. Lysine 201 is subject to N6-carboxylysine. The Proton acceptor role is filled by histidine 294. 3 residues coordinate substrate: arginine 295, histidine 327, and serine 379.

This sequence belongs to the RuBisCO large chain family. Type I subfamily. Heterohexadecamer of 8 large chains and 8 small chains. Mg(2+) serves as cofactor.

It localises to the plastid. It is found in the chloroplast. It catalyses the reaction 2 (2R)-3-phosphoglycerate + 2 H(+) = D-ribulose 1,5-bisphosphate + CO2 + H2O. The enzyme catalyses D-ribulose 1,5-bisphosphate + O2 = 2-phosphoglycolate + (2R)-3-phosphoglycerate + 2 H(+). Its function is as follows. RuBisCO catalyzes two reactions: the carboxylation of D-ribulose 1,5-bisphosphate, the primary event in carbon dioxide fixation, as well as the oxidative fragmentation of the pentose substrate in the photorespiration process. Both reactions occur simultaneously and in competition at the same active site. The sequence is that of Ribulose bisphosphate carboxylase large chain from Coleochaete orbicularis (Charophycean green alga).